Here is a 420-residue protein sequence, read N- to C-terminus: UDP-N-acetylglucosamine 1-carboxyvinyltransferase (420 aa).

A phosphoenolpyruvate-binding site is contributed by 22–23; that stretch reads KN. Position 93 (Arg93) interacts with UDP-N-acetyl-alpha-D-glucosamine. The Proton donor role is filled by Cys117. 2-(S-cysteinyl)pyruvic acid O-phosphothioketal is present on Cys117. 2 residues coordinate UDP-N-acetyl-alpha-D-glucosamine: Asp306 and Ile328.

Belongs to the EPSP synthase family. MurA subfamily.

It is found in the cytoplasm. It carries out the reaction phosphoenolpyruvate + UDP-N-acetyl-alpha-D-glucosamine = UDP-N-acetyl-3-O-(1-carboxyvinyl)-alpha-D-glucosamine + phosphate. Its pathway is cell wall biogenesis; peptidoglycan biosynthesis. Its function is as follows. Cell wall formation. Adds enolpyruvyl to UDP-N-acetylglucosamine. This Colwellia psychrerythraea (strain 34H / ATCC BAA-681) (Vibrio psychroerythus) protein is UDP-N-acetylglucosamine 1-carboxyvinyltransferase.